The chain runs to 456 residues: N(6)-adenosine-methyltransferase non-catalytic subunit METTL14 (456 aa).

Residues 39 to 51 (DEQREIAETRETS) are compositionally biased toward basic and acidic residues. Positions 39–74 (DEQREIAETRETSRASYDTSATVSKRKMPEEGEADE) are disordered. A compositionally biased stretch (polar residues) spans 52–61 (RASYDTSATV). Interaction with METTL3 regions lie at residues 135-136 (RD) and 237-238 (SG). The positively charged region required for RNA-binding stretch occupies residues 245–254 (RMCLRKWGFR). 2 interaction with METTL3 regions span residues 255-258 (RSED) and 278-287 (KAIFQRTKEH). Positions 297–298 (HR) are positively charged region required for RNA-binding. Residues 308–312 (NVDID) are interaction with METTL3. Residues 395–456 (LRPKTPPPKS…GPHRGVFAPR (62 aa)) form a disordered region. Positions 410-421 (ASRGGGRGGPSA) are enriched in gly residues. Residues 423–441 (RGERGRERNRGSFRGDRGN) show a composition bias toward basic and acidic residues.

It belongs to the MT-A70-like family. In terms of assembly, heterodimer; heterodimerizes with mettl3 to form an antiparallel heterodimer that constitutes an active methyltransferase. Component of the WMM complex, a N6-methyltransferase complex composed of a catalytic subcomplex, named MAC, and of an associated subcomplex, named MACOM. The MAC subcomplex is composed of mettl3 and mettl14.

Its subcellular location is the nucleus. Its function is as follows. The METTL3-METTL14 heterodimer forms a N6-methyltransferase complex that methylates adenosine residues at the N(6) position of some mRNAs and regulates the circadian clock, differentiation of embryonic stem cells and cortical neurogenesis. In the heterodimer formed with mettl3, mettl14 constitutes the RNA-binding scaffold that recognizes the substrate rather than the catalytic core. N6-methyladenosine (m6A), which takes place at the 5'-[AG]GAC-3' consensus sites of some mRNAs, plays a role in mRNA stability and processing. In Xenopus tropicalis (Western clawed frog), this protein is N(6)-adenosine-methyltransferase non-catalytic subunit METTL14 (mettl14).